The following is a 413-amino-acid chain: L-arginine-specific L-amino acid ligase (413 aa).

An ATP-grasp domain is found at 115-312 (KTKLKMEGIP…LWESSLNISV (198 aa)). 141–202 (GEKLGWPIIV…EKCIEMEEFH (62 aa)) lines the ATP pocket. 2 residues coordinate Mg(2+): Glu268 and Glu281. Mn(2+)-binding residues include Glu268 and Glu281.

In terms of assembly, homodimer. Mg(2+) is required as a cofactor. Requires Mn(2+) as cofactor. The cofactor is Co(2+).

It carries out the reaction an L-alpha-amino acid + L-arginine + ATP = L-arginyl-L-alpha-amino acid + ADP + phosphate + H(+). In terms of biological role, catalyzes the synthesis of Arg-Xaa dipeptides in an ATP-dependent manner. Has strict specificity toward arginine as the N-terminal substrate. The sequence is that of L-arginine-specific L-amino acid ligase from Bacillus subtilis.